The chain runs to 415 residues: Plasminogen activator inhibitor 2 (415 aa).

The cysteines at positions 5 and 405 are disulfide-linked. Asn75, Asn115, and Asn339 each carry an N-linked (GlcNAc...) asparagine glycan.

Belongs to the serpin family. Ov-serpin subfamily. As to quaternary structure, interacts with PSMB1. Post-translationally, the signal sequence is not cleaved.

The protein localises to the cytoplasm. Its subcellular location is the secreted. The protein resides in the extracellular space. In terms of biological role, inhibits urokinase-type plasminogen activator. The monocyte derived PAI-2 is distinct from the endothelial cell-derived PAI-1. This chain is Plasminogen activator inhibitor 2 (SERPINB2), found in Homo sapiens (Human).